The primary structure comprises 609 residues: MCGIVGAVAQRDIAEILIEGLRRLEYRGYDSAGLAVVDNEKNMFRLREVGKVQVLADEVDKQPVLGGTGIAHTRWATHGEPNEKNAHPHVSDYIAVVHNGIIENYEELRVQLIALGYQFISDTDTEVIAHLVHWEQKQGGTLLEAIQRVIPRLRGAYGAVIMDSRDPGTIIAARSGSPLVIGLGVGENFLASDQLALLPVTRRFIFLEEGDIAEVTRRTVRIFNTQGKPVEREQIESNIQYDAGDKGIYRHYMQKEIYEQPMAIKSTLERRLSHGQVDLSELGPNAAKLLAKVEHIQIVACGTSYNAGMVSRYWFEALAGIPCDVEIASEFRYRKSARRSGSLLITLSQSGETADTLAALRLSKELGYLTSLTVCNVAGSSLVRESDFALMTKAGAEIGVASTKAFTTQLTVLLMLVAYLGRLKGVDAEQEQEIVHALHALPSRIEGMLSKDKIIEVLAEDFSDKHHALFLGRGDQYPIAVEGALKLKEISYIHAEAYAAGELKHGPLALIDADMPVIIVAPNNELLEKLKSNIEEVRARGGLLYVFADQDAGFTDSEGMKIIPLPHVEELIAPIFYTVPLQLLSYHVALIKGTDVDQPRNLAKSVTVE.

Catalysis depends on C2, which acts as the Nucleophile; for GATase activity. Residues 2-218 (CGIVGAVAQR…EGDIAEVTRR (217 aa)) form the Glutamine amidotransferase type-2 domain. 2 SIS domains span residues 286–426 (AAKL…LKGV) and 458–599 (LAED…VDQP). Residue K604 is the For Fru-6P isomerization activity of the active site.

Homodimer.

It localises to the cytoplasm. It carries out the reaction D-fructose 6-phosphate + L-glutamine = D-glucosamine 6-phosphate + L-glutamate. Its function is as follows. Catalyzes the first step in hexosamine metabolism, converting fructose-6P into glucosamine-6P using glutamine as a nitrogen source. The chain is Glutamine--fructose-6-phosphate aminotransferase [isomerizing] from Photorhabdus laumondii subsp. laumondii (strain DSM 15139 / CIP 105565 / TT01) (Photorhabdus luminescens subsp. laumondii).